The following is a 254-amino-acid chain: Putative hydro-lyase SACE_1553 (254 aa).

It belongs to the D-glutamate cyclase family.

This chain is Putative hydro-lyase SACE_1553, found in Saccharopolyspora erythraea (strain ATCC 11635 / DSM 40517 / JCM 4748 / NBRC 13426 / NCIMB 8594 / NRRL 2338).